A 349-amino-acid chain; its full sequence is MELDLEPTLKPLIEQDTLKWIFVGGKGGVGKTTTSSSIAVQLALQHPESEFLLISTDPAHNLSDAFCQKFGKEARKVEGLSNLSCMEIDPEAAMSDLQQQAQQYNNDPNDPLKSIMSDMTGSIPGIDEALSFMEVLKHIKNQKVNENDSKDKISYRTIIFDTAPTGHTLRFLQLPSTLQKLLGKFQQLSGKLGPMMSMLGGGAGGQQDMFEKLNEVQKNVAEVNEQFTDPELTTFVCVCISEFLSLYETERMIQELMSYKMDVNSIVVNQLLFADDDENPCLRCVSRWKMQKKYLDQMAELYEDYHLVKMPLLGTEIRGVENLKKFSKFLMVPYDPKKDRGLITEMKEQ.

26–33 (KGGVGKTT) provides a ligand contact to ATP. Asp57 is a catalytic residue. The ATP site is built by Glu242 and Asn269. The Zn(2+) site is built by Cys281 and Cys284.

The protein belongs to the arsA ATPase family. In terms of assembly, homodimer. Component of the Golgi to ER traffic (GET) complex, which is composed of GET1, GET2 and GET3. Within the complex, GET1 and GET2 form a heterotetramer which is stabilized by phosphatidylinositol binding and which binds to the GET3 homodimer. Interacts with the chloride channel protein GEF1.

The protein localises to the cytoplasm. The protein resides in the endoplasmic reticulum. Its subcellular location is the golgi apparatus. ATPase required for the post-translational delivery of tail-anchored (TA) proteins to the endoplasmic reticulum. Recognizes and selectively binds the transmembrane domain of TA proteins in the cytosol. This complex then targets to the endoplasmic reticulum by membrane-bound receptors GET1 and GET2, where the tail-anchored protein is released for insertion. This process is regulated by ATP binding and hydrolysis. ATP binding drives the homodimer towards the closed dimer state, facilitating recognition of newly synthesized TA membrane proteins. ATP hydrolysis is required for insertion. Subsequently, the homodimer reverts towards the open dimer state, lowering its affinity for the GET1-GET2 receptor, and returning it to the cytosol to initiate a new round of targeting. Cooperates with the HDEL receptor ERD2 to mediate the ATP-dependent retrieval of resident ER proteins that contain a C-terminal H-D-E-L retention signal from the Golgi to the ER. Involved in low-level resistance to the oxyanions arsenite and arsenate, and in heat tolerance. The polypeptide is ATPase GET3 (Lodderomyces elongisporus (strain ATCC 11503 / CBS 2605 / JCM 1781 / NBRC 1676 / NRRL YB-4239) (Yeast)).